A 346-amino-acid polypeptide reads, in one-letter code: Trans-enoyl reductase FFUJ_12240 (346 aa).

Position 40-43 (40-43 (HDAK)) interacts with NADP(+). Position 124 to 131 (124 to 131 (LAIATAGL)) interacts with substrate. Residues 157 to 160 (ATAT), 180 to 183 (SPSN), Y198, and 245 to 246 (LE) each bind NADP(+). 266–270 (APSIL) contributes to the substrate binding site. 335-336 (VH) contacts NADP(+).

This sequence belongs to the zinc-containing alcohol dehydrogenase family.

Functionally, trans-enoyl reductase; part of the gene cluster that mediates the biosynthesis of fujikurins A-D, secondary metabolites playing a role during rice infection. The polyketide synthase PKS19 acts with the trans-enoyl reductase FFUJ_12240 and the polyketide transferase FFUJ_12241 to produce fujikurins, however, the biosynthesis pathway has not been identified yet. In Gibberella fujikuroi (strain CBS 195.34 / IMI 58289 / NRRL A-6831) (Bakanae and foot rot disease fungus), this protein is Trans-enoyl reductase FFUJ_12240.